Reading from the N-terminus, the 365-residue chain is tRNA N6-adenosine threonylcarbamoyltransferase (365 aa).

Fe cation contacts are provided by H119 and H123. Substrate is bound by residues 141 to 145 (LVSGG), D174, G187, and N288. D316 lines the Fe cation pocket.

It belongs to the KAE1 / TsaD family. It depends on Fe(2+) as a cofactor.

It is found in the cytoplasm. The catalysed reaction is L-threonylcarbamoyladenylate + adenosine(37) in tRNA = N(6)-L-threonylcarbamoyladenosine(37) in tRNA + AMP + H(+). In terms of biological role, required for the formation of a threonylcarbamoyl group on adenosine at position 37 (t(6)A37) in tRNAs that read codons beginning with adenine. Is involved in the transfer of the threonylcarbamoyl moiety of threonylcarbamoyl-AMP (TC-AMP) to the N6 group of A37, together with TsaE and TsaB. TsaD likely plays a direct catalytic role in this reaction. In Rhizobium johnstonii (strain DSM 114642 / LMG 32736 / 3841) (Rhizobium leguminosarum bv. viciae), this protein is tRNA N6-adenosine threonylcarbamoyltransferase.